Reading from the N-terminus, the 100-residue chain is Urease subunit gamma (100 aa).

Belongs to the urease gamma subunit family. As to quaternary structure, heterotrimer of UreA (gamma), UreB (beta) and UreC (alpha) subunits. Three heterotrimers associate to form the active enzyme.

It is found in the cytoplasm. The catalysed reaction is urea + 2 H2O + H(+) = hydrogencarbonate + 2 NH4(+). It functions in the pathway nitrogen metabolism; urea degradation; CO(2) and NH(3) from urea (urease route): step 1/1. The chain is Urease subunit gamma from Pseudomonas aeruginosa (strain UCBPP-PA14).